The sequence spans 147 residues: 3-dehydroquinate dehydratase (147 aa).

The Proton acceptor role is filled by Tyr-25. Substrate-binding residues include Asn-76, His-82, and Asp-89. Residue His-102 is the Proton donor of the active site. Residues Ile-103–Ser-104 and Arg-113 each bind substrate.

Belongs to the type-II 3-dehydroquinase family. Homododecamer.

It catalyses the reaction 3-dehydroquinate = 3-dehydroshikimate + H2O. Its pathway is metabolic intermediate biosynthesis; chorismate biosynthesis; chorismate from D-erythrose 4-phosphate and phosphoenolpyruvate: step 3/7. Functionally, catalyzes a trans-dehydration via an enolate intermediate. This chain is 3-dehydroquinate dehydratase, found in Mycobacterium tuberculosis (strain ATCC 25177 / H37Ra).